A 166-amino-acid chain; its full sequence is NAD(P)H-quinone oxidoreductase subunit I, chloroplastic (166 aa).

4Fe-4S ferredoxin-type domains follow at residues 55-84 (GRIH…VDWK) and 95-124 (LNYS…MTEE). [4Fe-4S] cluster is bound by residues Cys64, Cys67, Cys70, Cys74, Cys104, Cys107, Cys110, and Cys114.

Belongs to the complex I 23 kDa subunit family. NDH is composed of at least 16 different subunits, 5 of which are encoded in the nucleus. The cofactor is [4Fe-4S] cluster.

It is found in the plastid. The protein localises to the chloroplast thylakoid membrane. The enzyme catalyses a plastoquinone + NADH + (n+1) H(+)(in) = a plastoquinol + NAD(+) + n H(+)(out). It carries out the reaction a plastoquinone + NADPH + (n+1) H(+)(in) = a plastoquinol + NADP(+) + n H(+)(out). NDH shuttles electrons from NAD(P)H:plastoquinone, via FMN and iron-sulfur (Fe-S) centers, to quinones in the photosynthetic chain and possibly in a chloroplast respiratory chain. The immediate electron acceptor for the enzyme in this species is believed to be plastoquinone. Couples the redox reaction to proton translocation, and thus conserves the redox energy in a proton gradient. The protein is NAD(P)H-quinone oxidoreductase subunit I, chloroplastic of Palafoxia arida (Spanish needles).